The chain runs to 213 residues: Sclerostin (213 aa).

A signal peptide spans 1–28 (MQLSLAPCLACLLVHAAFVAVESQGWQA). Asn-53 is a glycosylation site (N-linked (GlcNAc...) asparagine). 4 disulfide bridges follow: Cys-80–Cys-134, Cys-94–Cys-148, Cys-105–Cys-165, and Cys-109–Cys-167. A CTCK domain is found at 82-172 (ELHYTRFVTD…ASCKCKRLTR (91 aa)). The N-linked (GlcNAc...) asparagine glycan is linked to Asn-175. The disordered stretch occupies residues 178-213 (ELKDFGPETARPQKGRKPRPRARGAKANQAELENAY). The segment covering 190-201 (QKGRKPRPRARG) has biased composition (basic residues).

Belongs to the sclerostin family. In terms of assembly, interacts with LRP4 (via the extracellular domain); the interaction facilitates the inhibition of Wnt signaling. Interacts with LRP5 (via the first two YWTD-EGF repeat domains); the interaction inhibits Wnt-mediated signaling. Interacts with LRP6.

It localises to the secreted. Functionally, negative regulator of bone growth that acts through inhibition of Wnt signaling and bone formation. The chain is Sclerostin from Rattus norvegicus (Rat).